The primary structure comprises 234 residues: tRNA (guanine-N(1)-)-methyltransferase (234 aa).

Residues Gly-110 and 134 to 139 (IGDYVL) each bind S-adenosyl-L-methionine.

This sequence belongs to the RNA methyltransferase TrmD family. As to quaternary structure, homodimer.

It localises to the cytoplasm. It carries out the reaction guanosine(37) in tRNA + S-adenosyl-L-methionine = N(1)-methylguanosine(37) in tRNA + S-adenosyl-L-homocysteine + H(+). In terms of biological role, specifically methylates guanosine-37 in various tRNAs. The protein is tRNA (guanine-N(1)-)-methyltransferase of Tropheryma whipplei (strain TW08/27) (Whipple's bacillus).